A 597-amino-acid chain; its full sequence is Elongation factor 4 (597 aa).

The tr-type G domain maps to lysine 2–lysine 184. GTP-binding positions include aspartate 14 to threonine 19 and asparagine 131 to aspartate 134.

The protein belongs to the TRAFAC class translation factor GTPase superfamily. Classic translation factor GTPase family. LepA subfamily.

It is found in the cell inner membrane. The enzyme catalyses GTP + H2O = GDP + phosphate + H(+). Functionally, required for accurate and efficient protein synthesis under certain stress conditions. May act as a fidelity factor of the translation reaction, by catalyzing a one-codon backward translocation of tRNAs on improperly translocated ribosomes. Back-translocation proceeds from a post-translocation (POST) complex to a pre-translocation (PRE) complex, thus giving elongation factor G a second chance to translocate the tRNAs correctly. Binds to ribosomes in a GTP-dependent manner. The chain is Elongation factor 4 from Laribacter hongkongensis (strain HLHK9).